We begin with the raw amino-acid sequence, 431 residues long: Histidinol dehydrogenase (431 aa).

NAD(+) is bound by residues Y127, Q189, and N212. Residues S237, Q259, and H262 each contribute to the substrate site. Positions 259 and 262 each coordinate Zn(2+). Catalysis depends on proton acceptor residues E326 and H327. Substrate is bound by residues H327, D360, E414, and H419. D360 provides a ligand contact to Zn(2+). Residue H419 coordinates Zn(2+).

It belongs to the histidinol dehydrogenase family. Requires Zn(2+) as cofactor.

The enzyme catalyses L-histidinol + 2 NAD(+) + H2O = L-histidine + 2 NADH + 3 H(+). It participates in amino-acid biosynthesis; L-histidine biosynthesis; L-histidine from 5-phospho-alpha-D-ribose 1-diphosphate: step 9/9. Functionally, catalyzes the sequential NAD-dependent oxidations of L-histidinol to L-histidinaldehyde and then to L-histidine. The polypeptide is Histidinol dehydrogenase (Xanthomonas campestris pv. campestris (strain 8004)).